The sequence spans 197 residues: dCTP deaminase (197 aa).

DCTP is bound by residues Arg110–Arg115, Asp128, Val136–Glu138, Tyr171, and Gln182. Glu138 serves as the catalytic Proton donor/acceptor.

This sequence belongs to the dCTP deaminase family. Homotrimer.

It carries out the reaction dCTP + H2O + H(+) = dUTP + NH4(+). The protein operates within pyrimidine metabolism; dUMP biosynthesis; dUMP from dCTP (dUTP route): step 1/2. Its function is as follows. Catalyzes the deamination of dCTP to dUTP. This chain is dCTP deaminase, found in Alteromonas mediterranea (strain DSM 17117 / CIP 110805 / LMG 28347 / Deep ecotype).